Here is a 122-residue protein sequence, read N- to C-terminus: Proteasome assembly chaperone 3 (122 aa).

M1 carries the N-acetylmethionine modification.

It belongs to the PSMG3 family. As to quaternary structure, homodimer. Interacts directly with alpha and beta subunits of the 20S proteasome but dissociates before the formation of half-proteasomes, probably upon recruitment of POMP. Interacts with PSMG4.

In terms of biological role, chaperone protein which promotes assembly of the 20S proteasome. May cooperate with PSMG1-PSMG2 heterodimers to orchestrate the correct assembly of proteasomes. The polypeptide is Proteasome assembly chaperone 3 (Psmg3) (Mus musculus (Mouse)).